Reading from the N-terminus, the 968-residue chain is RNA polymerase-associated protein RapA (968 aa).

The 171-residue stretch at 164 to 334 (DVGRRHAPRV…FARLRLLDPD (171 aa)) folds into the Helicase ATP-binding domain. 177-184 (DEVGLGKT) serves as a coordination point for ATP. Positions 280–283 (DEAH) match the DEAH box motif. The region spanning 490–643 (RVEWLMGYLT…HTCPTGRAVY (154 aa)) is the Helicase C-terminal domain.

Belongs to the SNF2/RAD54 helicase family. RapA subfamily. Interacts with the RNAP. Has a higher affinity for the core RNAP than for the holoenzyme. Its ATPase activity is stimulated by binding to RNAP.

Functionally, transcription regulator that activates transcription by stimulating RNA polymerase (RNAP) recycling in case of stress conditions such as supercoiled DNA or high salt concentrations. Probably acts by releasing the RNAP, when it is trapped or immobilized on tightly supercoiled DNA. Does not activate transcription on linear DNA. Probably not involved in DNA repair. This is RNA polymerase-associated protein RapA from Erwinia tasmaniensis (strain DSM 17950 / CFBP 7177 / CIP 109463 / NCPPB 4357 / Et1/99).